Reading from the N-terminus, the 58-residue chain is Sodium/potassium-transporting ATPase subunit gamma (58 aa).

The helical transmembrane segment at 20–39 (NGGLIFAALAFIVGLVIILS) threads the bilayer.

Belongs to the FXYD family. As to quaternary structure, regulatory subunit of the sodium/potassium-transporting ATPase which is composed of a catalytic alpha subunit, an auxiliary non-catalytic beta subunit and an additional regulatory subunit. In terms of tissue distribution, highest levels expressed in the kidney and spleen. Restricted to the basolateral membrane in renal epithelial cells and varies in its level of expression along the nephron.

It localises to the membrane. May be involved in forming the receptor site for cardiac glycoside binding or may modulate the transport function of the sodium ATPase. This chain is Sodium/potassium-transporting ATPase subunit gamma (FXYD2), found in Bos taurus (Bovine).